The following is a 305-amino-acid chain: Ribosomal RNA small subunit methyltransferase H (305 aa).

S-adenosyl-L-methionine is bound by residues 37–39 (GGH), aspartate 57, phenylalanine 85, aspartate 101, and histidine 108.

This sequence belongs to the methyltransferase superfamily. RsmH family.

The protein localises to the cytoplasm. It carries out the reaction cytidine(1402) in 16S rRNA + S-adenosyl-L-methionine = N(4)-methylcytidine(1402) in 16S rRNA + S-adenosyl-L-homocysteine + H(+). Specifically methylates the N4 position of cytidine in position 1402 (C1402) of 16S rRNA. The chain is Ribosomal RNA small subunit methyltransferase H from Parabacteroides distasonis (strain ATCC 8503 / DSM 20701 / CIP 104284 / JCM 5825 / NCTC 11152).